We begin with the raw amino-acid sequence, 106 residues long: Integration host factor subunit alpha (106 aa).

The protein belongs to the bacterial histone-like protein family. As to quaternary structure, heterodimer of an alpha and a beta chain.

Functionally, this protein is one of the two subunits of integration host factor, a specific DNA-binding protein that functions in genetic recombination as well as in transcriptional and translational control. The chain is Integration host factor subunit alpha from Paramagnetospirillum magneticum (strain ATCC 700264 / AMB-1) (Magnetospirillum magneticum).